An 860-amino-acid chain; its full sequence is Receptor-like protein 31 (860 aa).

Positions methionine 1–alanine 23 are cleaved as a signal peptide. Residues serine 24–tryptophan 809 lie on the Extracellular side of the membrane. N-linked (GlcNAc...) asparagine glycans are attached at residues asparagine 49, asparagine 64, asparagine 88, asparagine 95, asparagine 112, asparagine 117, asparagine 154, asparagine 178, asparagine 202, and asparagine 213. LRR repeat units lie at residues glutamine 108–leucine 131, phenylalanine 132–leucine 155, serine 156–leucine 179, glutamine 181–asparagine 202, leucine 203–glycine 226, and phenylalanine 227–isoleucine 251. The stretch at proline 252–proline 276 is one LRR 7; degenerate repeat. LRR repeat units follow at residues serine 277–tyrosine 301, leucine 302–isoleucine 325, proline 326–serine 349, serine 350–tyrosine 374, asparagine 376–leucine 398, lysine 400–leucine 419, tryptophan 420–glutamate 444, glutamine 446–leucine 468, arginine 469–valine 494, leucine 496–alanine 517, threonine 518–cysteine 541, alanine 543–serine 564, leucine 565–phenylalanine 591, and glutamine 592–serine 615. N-linked (GlcNAc...) asparagine glycosylation is found at asparagine 313, asparagine 346, and asparagine 364. Asparagine 429 is a glycosylation site (N-linked (GlcNAc...) asparagine). Residues asparagine 482, asparagine 503, and asparagine 516 are each glycosylated (N-linked (GlcNAc...) asparagine). N-linked (GlcNAc...) asparagine glycosylation is found at asparagine 642, asparagine 673, and asparagine 697. LRR repeat units follow at residues isoleucine 665–leucine 690, lysine 691–leucine 714, lysine 716–leucine 738, and phenylalanine 740–glycine 763. Asparagine 745 and asparagine 765 each carry an N-linked (GlcNAc...) asparagine glycan. Residues isoleucine 810–phenylalanine 830 traverse the membrane as a helical segment. The Cytoplasmic segment spans residues leucine 831–histidine 860.

Belongs to the RLP family.

Its subcellular location is the cell membrane. This chain is Receptor-like protein 31, found in Arabidopsis thaliana (Mouse-ear cress).